The chain runs to 393 residues: S-adenosylmethionine synthase 2 (393 aa).

Glutamate 9 is a Mg(2+) binding site. Position 15 (histidine 15) interacts with ATP. Position 43 (glutamate 43) interacts with K(+). Glutamate 56 and glutamine 99 together coordinate L-methionine. Residues 167–169, 235–238, aspartate 246, 252–253, alanine 269, lysine 273, and lysine 277 each bind ATP; these read DGK, SGRF, and RK. Position 246 (aspartate 246) interacts with L-methionine. Lysine 277 contacts L-methionine.

This sequence belongs to the AdoMet synthase family. In terms of assembly, homotetramer. The cofactor is Mn(2+). Mg(2+) serves as cofactor. Requires Co(2+) as cofactor. It depends on K(+) as a cofactor. Mostly expressed in roots. Also present in stems and leaves.

It is found in the cytoplasm. It catalyses the reaction L-methionine + ATP + H2O = S-adenosyl-L-methionine + phosphate + diphosphate. It participates in amino-acid biosynthesis; S-adenosyl-L-methionine biosynthesis; S-adenosyl-L-methionine from L-methionine: step 1/1. Functionally, catalyzes the formation of S-adenosylmethionine from methionine and ATP. The reaction comprises two steps that are both catalyzed by the same enzyme: formation of S-adenosylmethionine (AdoMet) and triphosphate, and subsequent hydrolysis of the triphosphate. This chain is S-adenosylmethionine synthase 2 (SAM2), found in Solanum lycopersicum (Tomato).